We begin with the raw amino-acid sequence, 513 residues long: ATP synthase subunit alpha (513 aa).

169–176 provides a ligand contact to ATP; that stretch reads GDRQTGKT.

This sequence belongs to the ATPase alpha/beta chains family. F-type ATPases have 2 components, CF(1) - the catalytic core - and CF(0) - the membrane proton channel. CF(1) has five subunits: alpha(3), beta(3), gamma(1), delta(1), epsilon(1). CF(0) has three main subunits: a(1), b(2) and c(9-12). The alpha and beta chains form an alternating ring which encloses part of the gamma chain. CF(1) is attached to CF(0) by a central stalk formed by the gamma and epsilon chains, while a peripheral stalk is formed by the delta and b chains.

It is found in the cell inner membrane. It catalyses the reaction ATP + H2O + 4 H(+)(in) = ADP + phosphate + 5 H(+)(out). Produces ATP from ADP in the presence of a proton gradient across the membrane. The alpha chain is a regulatory subunit. In Cupriavidus metallidurans (strain ATCC 43123 / DSM 2839 / NBRC 102507 / CH34) (Ralstonia metallidurans), this protein is ATP synthase subunit alpha.